The chain runs to 117 residues: MPRVKRGVQARARHKKVLKQAKGYYGARSRVYRVAFQAVTKAGQYAYRDRRNKKRVFRQLWIARINAAARQNGLSYSRFINGLKKASIEIDRKILADIAVFDKVAFAALVAKANAAL.

It belongs to the bacterial ribosomal protein bL20 family.

Binds directly to 23S ribosomal RNA and is necessary for the in vitro assembly process of the 50S ribosomal subunit. It is not involved in the protein synthesizing functions of that subunit. This is Large ribosomal subunit protein bL20 from Aliivibrio salmonicida (strain LFI1238) (Vibrio salmonicida (strain LFI1238)).